Here is a 418-residue protein sequence, read N- to C-terminus: Serine--tRNA ligase (418 aa).

227–229 (TSE) serves as a coordination point for L-serine. ATP contacts are provided by residues 258 to 260 (RRE) and Val-274. An L-serine-binding site is contributed by Glu-281. 345–348 (ELTS) is a binding site for ATP. L-serine is bound at residue Thr-380.

The protein belongs to the class-II aminoacyl-tRNA synthetase family. Type-1 seryl-tRNA synthetase subfamily. As to quaternary structure, homodimer. The tRNA molecule binds across the dimer.

It localises to the cytoplasm. It catalyses the reaction tRNA(Ser) + L-serine + ATP = L-seryl-tRNA(Ser) + AMP + diphosphate + H(+). It carries out the reaction tRNA(Sec) + L-serine + ATP = L-seryl-tRNA(Sec) + AMP + diphosphate + H(+). It functions in the pathway aminoacyl-tRNA biosynthesis; selenocysteinyl-tRNA(Sec) biosynthesis; L-seryl-tRNA(Sec) from L-serine and tRNA(Sec): step 1/1. In terms of biological role, catalyzes the attachment of serine to tRNA(Ser). Is also able to aminoacylate tRNA(Sec) with serine, to form the misacylated tRNA L-seryl-tRNA(Sec), which will be further converted into selenocysteinyl-tRNA(Sec). This is Serine--tRNA ligase from Rhodococcus opacus (strain B4).